The following is a 347-amino-acid chain: 5-deoxyribose 1-phosphate isomerase (347 aa).

Residues 48–50, R91, and Q198 each bind substrate; that span reads RGA. D239 serves as the catalytic Proton donor. Substrate is bound at residue 249-250; it reads NK.

This sequence belongs to the EIF-2B alpha/beta/delta subunits family. DrdI subfamily.

It catalyses the reaction 5-deoxy-alpha-D-ribose 1-phosphate = 5-deoxy-D-ribulose 1-phosphate. It functions in the pathway carbohydrate degradation. Functionally, catalyzes the isomerization of 5-deoxy-alpha-D-ribose 1-phosphate to 5-deoxy-D-ribulose 1-phosphate, as part of a 5-deoxyribose salvage pathway that recycles this toxic radical SAM enzyme by-product to mainstream metabolites. This chain is 5-deoxyribose 1-phosphate isomerase, found in Bacillus cereus (strain ATCC 14579 / DSM 31 / CCUG 7414 / JCM 2152 / NBRC 15305 / NCIMB 9373 / NCTC 2599 / NRRL B-3711).